Consider the following 177-residue polypeptide: Large ribosomal subunit protein uL6 (177 aa).

The protein belongs to the universal ribosomal protein uL6 family. In terms of assembly, part of the 50S ribosomal subunit.

In terms of biological role, this protein binds to the 23S rRNA, and is important in its secondary structure. It is located near the subunit interface in the base of the L7/L12 stalk, and near the tRNA binding site of the peptidyltransferase center. The polypeptide is Large ribosomal subunit protein uL6 (Paracidovorax citrulli (strain AAC00-1) (Acidovorax citrulli)).